The sequence spans 115 residues: Large ribosomal subunit protein bL20c (115 aa).

It belongs to the bacterial ribosomal protein bL20 family.

It localises to the plastid. Its subcellular location is the chloroplast. Its function is as follows. Binds directly to 23S ribosomal RNA and is necessary for the in vitro assembly process of the 50S ribosomal subunit. It is not involved in the protein synthesizing functions of that subunit. The polypeptide is Large ribosomal subunit protein bL20c (Nymphaea alba (White water-lily)).